A 276-amino-acid chain; its full sequence is uncharacterized protein (276 aa).

Residues 1–25 (MNKKRLLPKASLGALFMLFGTALTA) form the signal peptide. Cysteine 26 carries the N-palmitoyl cysteine lipid modification. Cysteine 26 carries S-diacylglycerol cysteine lipidation.

The protein belongs to the MG439/MG440 family.

The protein resides in the cell membrane. This is an uncharacterized protein from Mycoplasma pneumoniae (strain ATCC 29342 / M129 / Subtype 1) (Mycoplasmoides pneumoniae).